The following is a 353-amino-acid chain: L-tryptophan dehydrogenase (353 aa).

An NAD(+)-binding site is contributed by R44. Catalysis depends on K80, which acts as the Proton donor/acceptor. NAD(+) is bound by residues D114, T146, 176–181, K204, and 255–257; these read GLGNVG and AAN.

Belongs to the Glu/Leu/Phe/Val dehydrogenases family. Homodimer.

The catalysed reaction is L-tryptophan + NAD(+) + H2O = indole-3-pyruvate + NH4(+) + NADH + H(+). Highly susceptible to inhibition by indole-3-pyruvate. Activity is not affected by the presence of metal ions, EDTA, KCl or DMSO. In terms of biological role, catalyzes the reversible oxidative deamination of L-tryptophan to indole-3-pyruvate in the presence of NAD(+). Shows weak activity with L-phenylalanine, but cannot use other L-amino acids and D-Trp. Cannot use NADP(+) for oxidative deamination of L-Trp, and shows only weak activity with NADPH for reductive amination of indole-3-pyruvate. Involved in the biosynthesis of scytonemin, a cyanobacterial radiation-absorbing pigment. This Nostoc punctiforme protein is L-tryptophan dehydrogenase.